The chain runs to 255 residues: Adenosine 5'-phosphosulfate reductase (255 aa).

Residues 1–39 (MMTAEVRTPEQGGGPLTTEPRAPRSAPGHADASAPAFGP) are disordered. 4 residues coordinate [4Fe-4S] cluster: C137, C138, C220, and C223. Catalysis depends on C246, which acts as the Nucleophile; cysteine thiosulfonate intermediate.

This sequence belongs to the PAPS reductase family. CysH subfamily. Requires [4Fe-4S] cluster as cofactor.

It localises to the cytoplasm. It carries out the reaction [thioredoxin]-disulfide + sulfite + AMP + 2 H(+) = adenosine 5'-phosphosulfate + [thioredoxin]-dithiol. It functions in the pathway sulfur metabolism; hydrogen sulfide biosynthesis; sulfite from sulfate. Functionally, catalyzes the formation of sulfite from adenosine 5'-phosphosulfate (APS) using thioredoxin as an electron donor. In Deinococcus radiodurans (strain ATCC 13939 / DSM 20539 / JCM 16871 / CCUG 27074 / LMG 4051 / NBRC 15346 / NCIMB 9279 / VKM B-1422 / R1), this protein is Adenosine 5'-phosphosulfate reductase.